The chain runs to 111 residues: Wound-induced proteinase inhibitor 1 (111 aa).

The signal sequence occupies residues 1–23 (MEAKFAHIILFFLLAFSFETLMA). The propeptide occupies 24 to 36 (RKESDGPEVIKLL).

Belongs to the protease inhibitor I13 (potato type I serine protease inhibitor) family.

It is found in the secreted. This is Wound-induced proteinase inhibitor 1 from Solanum peruvianum (Peruvian tomato).